We begin with the raw amino-acid sequence, 231 residues long: Killer cell lectin-like receptor subfamily F member 1 (231 aa).

The Cytoplasmic segment spans residues 1–38 (MQDEERYMTLNVQSKKRSSAQTSQLTFKDYSVTLHWYK). Tyr7 carries the phosphotyrosine modification. The helical; Signal-anchor for type II membrane protein transmembrane segment at 39–59 (ILLGISGTVNGILTLTLISLI) threads the bilayer. The Extracellular segment spans residues 60–231 (LLVSQGVLLK…SSVFKWICQY (172 aa)). N-linked (GlcNAc...) asparagine glycosylation is found at Asn77, Asn91, Asn96, and Asn176. The C-type lectin domain occupies 121-230 (YQGKCYWFSN…CSSVFKWICQ (110 aa)). Disulfide bonds link Cys142–Cys229 and Cys208–Cys221.

As to quaternary structure, homodimer. Interacts with CLEC2B. Post-translationally, phosphorylated on Tyr-7; this phosphorylation is required for NKp80/KLRF1-mediated cytotoxicity. Strongly expressed in peripheral blood leukocytes and spleen, with weaker expression in lymph node and adult liver, and no expression detected in bone marrow, thymus, and fetal liver. Not expressed in brain, heart, placenta, lung, kidney, skeletal muscle, and pancreas. Within peripheral blood leukocyte and immunocyte cell lines, expression was predominant in NK cells but was also detected in monocytes.

The protein resides in the membrane. Functions as an activating receptor involved in immunosurveillance upon binding to various ligands displayed at the surface of myeloid cells. Upon interaction with CLEC2B ligand, stimulates NK-cell cytotoxicity and cytokine production leading to the cytolysis of malignant CLEC2B-expressing myeloid cells. Actviation of the common cytotoxicity pathway involves SRC and SYK kinases. This chain is Killer cell lectin-like receptor subfamily F member 1 (KLRF1), found in Homo sapiens (Human).